A 61-amino-acid polypeptide reads, in one-letter code: MARKALIEKWNKTPKHSTRAYTRCRICGRPHAVLKKYGICRICFRELAYKGEIPGCKKASW.

Positions 24, 27, 40, and 43 each coordinate Zn(2+).

This sequence belongs to the universal ribosomal protein uS14 family. Zinc-binding uS14 subfamily. As to quaternary structure, part of the 30S ribosomal subunit. Contacts proteins S3 and S10. The cofactor is Zn(2+).

Its function is as follows. Binds 16S rRNA, required for the assembly of 30S particles and may also be responsible for determining the conformation of the 16S rRNA at the A site. This is Small ribosomal subunit protein uS14 from Clostridium botulinum (strain ATCC 19397 / Type A).